The sequence spans 440 residues: Histidinol dehydrogenase (440 aa).

Tyr-134, Gln-196, and Asn-219 together coordinate NAD(+). Ser-242, Gln-264, and His-267 together coordinate substrate. Zn(2+)-binding residues include Gln-264 and His-267. Active-site proton acceptor residues include Glu-332 and His-333. Substrate contacts are provided by His-333, Asp-366, Glu-420, and His-425. Asp-366 provides a ligand contact to Zn(2+). Residue His-425 coordinates Zn(2+).

This sequence belongs to the histidinol dehydrogenase family. The cofactor is Zn(2+).

It catalyses the reaction L-histidinol + 2 NAD(+) + H2O = L-histidine + 2 NADH + 3 H(+). It functions in the pathway amino-acid biosynthesis; L-histidine biosynthesis; L-histidine from 5-phospho-alpha-D-ribose 1-diphosphate: step 9/9. In terms of biological role, catalyzes the sequential NAD-dependent oxidations of L-histidinol to L-histidinaldehyde and then to L-histidine. The chain is Histidinol dehydrogenase from Prochlorococcus marinus (strain SARG / CCMP1375 / SS120).